The sequence spans 104 residues: Large ribosomal subunit protein uL24 (104 aa).

Belongs to the universal ribosomal protein uL24 family. In terms of assembly, part of the 50S ribosomal subunit.

In terms of biological role, one of two assembly initiator proteins, it binds directly to the 5'-end of the 23S rRNA, where it nucleates assembly of the 50S subunit. Functionally, one of the proteins that surrounds the polypeptide exit tunnel on the outside of the subunit. In Shigella flexneri, this protein is Large ribosomal subunit protein uL24.